The primary structure comprises 675 residues: Methionine--tRNA ligase (675 aa).

A 'HIGH' region motif is present at residues 15 to 25 (PYANGSIHLGH). Zn(2+) is bound by residues Cys-146, Cys-149, Cys-159, and Cys-162. Residues 332–336 (KMSKS) carry the 'KMSKS' region motif. Lys-335 contacts ATP. The region spanning 573–675 (DFAKVDMRIA…SGAQPGMQVK (103 aa)) is the tRNA-binding domain.

The protein belongs to the class-I aminoacyl-tRNA synthetase family. MetG type 1 subfamily. As to quaternary structure, homodimer. The cofactor is Zn(2+).

It is found in the cytoplasm. It carries out the reaction tRNA(Met) + L-methionine + ATP = L-methionyl-tRNA(Met) + AMP + diphosphate. Functionally, is required not only for elongation of protein synthesis but also for the initiation of all mRNA translation through initiator tRNA(fMet) aminoacylation. The protein is Methionine--tRNA ligase of Yersinia pseudotuberculosis serotype O:1b (strain IP 31758).